The following is a 225-amino-acid chain: 3-dehydroquinate dehydratase (225 aa).

3-dehydroquinate is bound by residues Ser6, 30-32 (EWR), and Arg62. His118 serves as the catalytic Proton donor/acceptor. The active-site Schiff-base intermediate with substrate is Lys143. Residues Arg186, Ser205, and Gln209 each coordinate 3-dehydroquinate.

It belongs to the type-I 3-dehydroquinase family. Homodimer.

The enzyme catalyses 3-dehydroquinate = 3-dehydroshikimate + H2O. Its pathway is metabolic intermediate biosynthesis; chorismate biosynthesis; chorismate from D-erythrose 4-phosphate and phosphoenolpyruvate: step 3/7. In terms of biological role, involved in the third step of the chorismate pathway, which leads to the biosynthesis of aromatic amino acids. Catalyzes the cis-dehydration of 3-dehydroquinate (DHQ) and introduces the first double bond of the aromatic ring to yield 3-dehydroshikimate. The sequence is that of 3-dehydroquinate dehydratase from Streptococcus sanguinis (strain SK36).